The chain runs to 227 residues: Guanylate kinase (227 aa).

In terms of domain architecture, Guanylate kinase-like spans 21-199 (GNLFMVVAPS…ALAELECIVA (179 aa)). ATP is bound at residue 28-35 (APSGAGKS).

It belongs to the guanylate kinase family.

It is found in the cytoplasm. The catalysed reaction is GMP + ATP = GDP + ADP. Essential for recycling GMP and indirectly, cGMP. In Burkholderia mallei (strain ATCC 23344), this protein is Guanylate kinase.